The sequence spans 598 residues: F-box/WD repeat-containing protein 8 (598 aa).

Met-1 is modified (N-acetylmethionine). The tract at residues 20 to 97 is disordered; it reads SQALRRRRRL…PDRDATEPEP (78 aa). A compositionally biased stretch (basic and acidic residues) spans 29–44; sequence LEAGERRSPRRPEAGA. Low complexity predominate over residues 51–65; sequence GYLGLAQGLLEGAGR. Residues 73 to 93 show a composition bias toward basic and acidic residues; that stretch reads RGGDRKDTSSRSRSPPDRDAT. Ser-84 carries the post-translational modification Phosphoserine. Position 86 is a phosphoserine; by MTOR (Ser-86). In terms of domain architecture, F-box spans 113-159; sequence PFFDVRLPYELAINIFQYLNRRELGLCAQVSKTWKVIAEDEVLWYRL. WD repeat units lie at residues 201-250, 259-299, 300-340, 341-383, 384-429, 430-475, 476-513, and 514-561; these read AVSE…LESE, QPYV…FEHD, ARIQ…SEFE, VQKL…LHYV, YGQP…SKLG, NALG…SAHQ, LGVS…EVHS, and RHPV…AYEF.

As to quaternary structure, component of the Cul7-RING(FBXW8) complex consisting of CUL7, RBX1, SKP1 and FBXW8; within the complex interacts with CUL7 and SKP1. Interacts with GLMN isoform 1. Interacts with OBSL1, CUL1, CUL2, CCT6B, PFDN5, CCT2, CCT3, CCT6A, CCT7, VBP1, CCDC8, ARF1, TRIP13, PDCD5 and GORASP1. Interacts with MAP4K1/HPK1 (when autophosphorylated). Associated component of the 3M complex. Interacts with POUF51 (when phosphorylated on 'Ser-347'). In terms of processing, phosphorylation at Ser-86 by mTORC2 promotes FBXW8 stabilization, allowing its translocation to the cytosol in response to insulin. As to expression, widely expressed. Expressed at higher level in skeletal muscle, cartilage and lung.

The protein resides in the cytoplasm. Its subcellular location is the perinuclear region. It localises to the golgi apparatus. It is found in the cytosol. Its pathway is protein modification; protein ubiquitination. In terms of biological role, substrate-recognition component of the Cul7-RING(FBXW8) ubiquitin ligase complex, which mediates the ubiquitination and subsequent proteasomal degradation of target proteins. The Cul7-RING(FBXW8) complex mediates ubiquitination and consequent degradation of GORASP1, acting as a component of the ubiquitin ligase pathway that regulates Golgi morphogenesis and dendrite patterning in brain. Mediates ubiquitination and degradation of IRS1 in a mTOR-dependent manner: the Cul7-RING(FBXW8) complex recognizes and binds IRS1 previously phosphorylated by S6 kinase (RPS6KB1 or RPS6KB2). The Cul7-RING(FBXW8) complex also mediates ubiquitination of MAP4K1/HPK1: recognizes and binds autophosphorylated MAP4K1/HPK1, leading to its degradation, thereby affecting cell proliferation and differentiation. The Cul7-RING(FBXW8) complex also mediates ubiquitination of phosphorylated cyclin-D1 (CCND1). The Cul7-RING(FBXW8) complex is however not a major regulator of CCND1 stability during the G1/S transition. Associated component of the 3M complex, suggesting that it mediates some of 3M complex functions. This is F-box/WD repeat-containing protein 8 (Fbxw8) from Mus musculus (Mouse).